An 812-amino-acid polypeptide reads, in one-letter code: Plasminogen (812 aa).

A signal peptide spans 1–19; that stretch reads MDHKEIILLFLLFLKPGQG. The PAN domain maps to 20-98; the sequence is DSLDGYVSTQ…RDVILFEKRV (79 aa). 21 disulfides stabilise this stretch: Cys49-Cys73, Cys53-Cys61, Cys103-Cys181, Cys124-Cys164, Cys152-Cys176, Cys185-Cys262, Cys188-Cys316, Cys206-Cys245, Cys234-Cys257, Cys275-Cys352, Cys296-Cys335, Cys324-Cys347, Cys376-Cys454, Cys397-Cys437, Cys425-Cys449, Cys481-Cys560, Cys502-Cys543, Cys531-Cys555, Cys568-Cys687, Cys578-Cys586, and Cys609-Cys625. Kringle domains follow at residues 102–181, 184–262, 274–352, 375–454, and 480–560; these read ECKT…IPEC, ECMY…IPRC, QCLK…IPSC, ECYQ…LKRC, and DCMY…IPLC. The Peptidase S1 domain occupies 582-810; sequence VVGGCVANPH…YVNWIEREMR (229 aa). Ser598 carries the phosphoserine modification. Catalysis depends on charge relay system residues His624 and Asp667. Ser690 is subject to Phosphoserine. Intrachain disulfides connect Cys701/Cys768, Cys731/Cys747, and Cys758/Cys786. Residue Ser762 is the Charge relay system of the active site.

It belongs to the peptidase S1 family. Plasminogen subfamily. Interacts (both mature PLG and the angiostatin peptide) with AMOT and CSPG4. Interacts (via the Kringle domains) with HRG; the interaction tethers PLG to the cell surface and enhances its activation. Interacts (via Kringle 4 domain) with ADA; the interaction stimulates PLG activation when in complex with DPP4. Angiostatin: Interacts with ATP5F1A; the interaction inhibits most of the angiogenic effects of angiostatin. Post-translationally, in the presence of the inhibitor, the activation involves only cleavage after Arg-581, yielding two chains held together by two disulfide bonds. In the absence of the inhibitor, the activation involves additionally the removal of the activation peptide.

The protein resides in the secreted. The catalysed reaction is Preferential cleavage: Lys-|-Xaa &gt; Arg-|-Xaa, higher selectivity than trypsin. Converts fibrin into soluble products.. Converted into plasmin by plasminogen activators, both plasminogen and its activator being bound to fibrin. Cannot be activated with streptokinase. Functionally, plasmin dissolves the fibrin of blood clots and acts as a proteolytic factor in a variety of other processes including embryonic development, tissue remodeling, tumor invasion, and inflammation. In ovulation, weakens the walls of the Graafian follicle. It activates the urokinase-type plasminogen activator, collagenases and several complement zymogens, such as C1, C4 and C5. Cleavage of fibronectin and laminin leads to cell detachment and apoptosis. Also cleaves fibrin, thrombospondin and von Willebrand factor. Its role in tissue remodeling and tumor invasion may be modulated by CSPG4. Binds to cells. Angiostatin is an angiogenesis inhibitor that blocks neovascularization and growth of experimental primary and metastatic tumors in vivo. The chain is Plasminogen (Plg) from Rattus norvegicus (Rat).